The sequence spans 323 residues: ADP-L-glycero-D-manno-heptose-6-epimerase (323 aa).

NADP(+) is bound by residues 10–11 (FI), 31–32 (DN), lysine 38, arginine 53, 75–79 (MGACS), and asparagine 92. The active-site Proton acceptor is tyrosine 143. Position 147 (lysine 147) interacts with NADP(+). Asparagine 170 is a binding site for substrate. The NADP(+) site is built by valine 171 and lysine 179. The Proton acceptor role is filled by lysine 179. Substrate contacts are provided by residues aspartate 181, lysine 188, 202-205 (FRSC), arginine 216, and tyrosine 281.

The protein belongs to the NAD(P)-dependent epimerase/dehydratase family. HldD subfamily. Homopentamer. NADP(+) is required as a cofactor.

It catalyses the reaction ADP-D-glycero-beta-D-manno-heptose = ADP-L-glycero-beta-D-manno-heptose. Its pathway is nucleotide-sugar biosynthesis; ADP-L-glycero-beta-D-manno-heptose biosynthesis; ADP-L-glycero-beta-D-manno-heptose from D-glycero-beta-D-manno-heptose 7-phosphate: step 4/4. Its function is as follows. Catalyzes the interconversion between ADP-D-glycero-beta-D-manno-heptose and ADP-L-glycero-beta-D-manno-heptose via an epimerization at carbon 6 of the heptose. This is ADP-L-glycero-D-manno-heptose-6-epimerase from Nitratidesulfovibrio vulgaris (strain ATCC 29579 / DSM 644 / CCUG 34227 / NCIMB 8303 / VKM B-1760 / Hildenborough) (Desulfovibrio vulgaris).